A 240-amino-acid chain; its full sequence is Ribonuclease 3 (240 aa).

The RNase III domain occupies 9-141; sequence VEELQKRLGV…LLAALYLDQG (133 aa). Glu-54 contributes to the Mg(2+) binding site. Residue Asp-58 is part of the active site. 2 residues coordinate Mg(2+): Asp-127 and Glu-130. The active site involves Glu-130. One can recognise a DRBM domain in the interval 168–237; sequence DYKTALQEIV…ARKAYEKLVA (70 aa).

Belongs to the ribonuclease III family. As to quaternary structure, homodimer. Requires Mg(2+) as cofactor.

It is found in the cytoplasm. The catalysed reaction is Endonucleolytic cleavage to 5'-phosphomonoester.. Functionally, digests double-stranded RNA. Involved in the processing of primary rRNA transcript to yield the immediate precursors to the large and small rRNAs (23S and 16S). Processes some mRNAs, and tRNAs when they are encoded in the rRNA operon. Processes pre-crRNA and tracrRNA of type II CRISPR loci if present in the organism. The sequence is that of Ribonuclease 3 from Thermotoga neapolitana (strain ATCC 49049 / DSM 4359 / NBRC 107923 / NS-E).